A 542-amino-acid polypeptide reads, in one-letter code: MSDKVLVIGAGPNRIGQGIEFDYCTVHAVWAIQEEGYKAIIVNNNPETVSTDYDTSDKLYFEPITLEDVLNIVEKERPIGVLTQFGGQTSVNLTVPLAERGVRVLGTDPDDVDRLEDRDRFSKLLKKLGIPQPESGTANDPEEAVEVAEDIGYPVLVRPSYVIGGRAMEIVYDEEDLRRYIEEAAKVSPEHPILIDRFIEGGIECEIDGARDEAGNVLIPGIMEHIEEAGVHSGDSACVVPPQTLPEHAQETVLEYAEDIAEGANVIGLINIQFVYDPEEDEVYVIEANPRASRTVPFISKAVGIPLAKIGTKAILGREIPEVLDEMGLEPPDGDPGIVAVKEAVFSFEKWPGVDPVLGPEMKATGEVMGIDRTFGAAYWKAQLAAGHELPLEGTAVISVADRDKPDIVPIARKLQRLGFDLLATRGTASHLREHGIECEVVRKVSEGSPNIVDLIREGEIDLIINTPTEGKDARRDGYAIRRAAVKFKVPYITTIAAAKAAVEAIELVKEKGVTVNCLHDIHKGDWTPREVKPEELTRYGG.

A carbamoyl phosphate synthetic domain region spans residues 1–389 (MSDKVLVIGA…WKAQLAAGHE (389 aa)). Residues 122–316 (SKLLKKLGIP…LAKIGTKAIL (195 aa)) enclose the ATP-grasp domain. ATP-binding residues include Arg-158, Arg-197, Ile-199, Glu-204, Gly-230, Val-231, His-232, Ser-233, Gln-273, and Glu-287. The Mg(2+) site is built by Gln-273, Glu-287, and Asn-289. Gln-273, Glu-287, and Asn-289 together coordinate Mn(2+). The 155-residue stretch at 388 to 542 (HELPLEGTAV…KPEELTRYGG (155 aa)) folds into the MGS-like domain. The allosteric domain stretch occupies residues 390–542 (LPLEGTAVIS…KPEELTRYGG (153 aa)).

This sequence belongs to the CarB family. Composed of two chains; the small (or glutamine) chain promotes the hydrolysis of glutamine to ammonia, which is used by the large (or ammonia) chain to synthesize carbamoyl phosphate. Tetramer of heterodimers (alpha,beta)4. It depends on Mg(2+) as a cofactor. The cofactor is Mn(2+).

It catalyses the reaction hydrogencarbonate + L-glutamine + 2 ATP + H2O = carbamoyl phosphate + L-glutamate + 2 ADP + phosphate + 2 H(+). It carries out the reaction hydrogencarbonate + NH4(+) + 2 ATP = carbamoyl phosphate + 2 ADP + phosphate + 2 H(+). The protein operates within amino-acid biosynthesis; L-arginine biosynthesis; carbamoyl phosphate from bicarbonate: step 1/1. Its pathway is pyrimidine metabolism; UMP biosynthesis via de novo pathway; (S)-dihydroorotate from bicarbonate: step 1/3. Functionally, large subunit of the glutamine-dependent carbamoyl phosphate synthetase (CPSase). CPSase catalyzes the formation of carbamoyl phosphate from the ammonia moiety of glutamine, carbonate, and phosphate donated by ATP, constituting the first step of 2 biosynthetic pathways, one leading to arginine and/or urea and the other to pyrimidine nucleotides. The large subunit (synthetase) binds the substrates ammonia (free or transferred from glutamine from the small subunit), hydrogencarbonate and ATP and carries out an ATP-coupled ligase reaction, activating hydrogencarbonate by forming carboxy phosphate which reacts with ammonia to form carbamoyl phosphate. This chain is Carbamoyl phosphate synthase large chain, C-terminal section (carB2), found in Methanopyrus kandleri (strain AV19 / DSM 6324 / JCM 9639 / NBRC 100938).